The following is a 219-amino-acid chain: 7-cyano-7-deazaguanine synthase 2 (219 aa).

8–18 (YSGGMDSFTAL) is a binding site for ATP. Zn(2+) is bound by residues cysteine 185, cysteine 193, cysteine 196, and cysteine 199.

Belongs to the QueC family. Requires Zn(2+) as cofactor.

The catalysed reaction is 7-carboxy-7-deazaguanine + NH4(+) + ATP = 7-cyano-7-deazaguanine + ADP + phosphate + H2O + H(+). The protein operates within purine metabolism; 7-cyano-7-deazaguanine biosynthesis. Catalyzes the ATP-dependent conversion of 7-carboxy-7-deazaguanine (CDG) to 7-cyano-7-deazaguanine (preQ(0)). The polypeptide is 7-cyano-7-deazaguanine synthase 2 (Colwellia psychrerythraea (strain 34H / ATCC BAA-681) (Vibrio psychroerythus)).